The primary structure comprises 640 residues: Threonine--tRNA ligase (640 aa).

Positions 1 to 59 (MKIKVKLPDGKEKEYDRGITPAEIAKELGVKKAIGAVVNGELWDLKRPIENDCELRLVT) constitute a TGS domain. A catalytic region spans residues 240-531 (DHRKLGPHLE…LIEHFAGAFP (292 aa)). Zn(2+) is bound by residues Cys332, His383, and His508.

The protein belongs to the class-II aminoacyl-tRNA synthetase family. Homodimer. It depends on Zn(2+) as a cofactor.

It localises to the cytoplasm. The enzyme catalyses tRNA(Thr) + L-threonine + ATP = L-threonyl-tRNA(Thr) + AMP + diphosphate + H(+). Catalyzes the attachment of threonine to tRNA(Thr) in a two-step reaction: L-threonine is first activated by ATP to form Thr-AMP and then transferred to the acceptor end of tRNA(Thr). Also edits incorrectly charged L-seryl-tRNA(Thr). In Thermotoga petrophila (strain ATCC BAA-488 / DSM 13995 / JCM 10881 / RKU-1), this protein is Threonine--tRNA ligase.